Consider the following 284-residue polypeptide: Citrate lyase subunit beta-like protein (284 aa).

Substrate is bound by residues Arg74 and Glu129. Residues Glu129 and Asp155 each coordinate Mg(2+).

The protein belongs to the HpcH/HpaI aldolase family. Citrate lyase beta subunit-like subfamily. As to quaternary structure, homotrimer. The cofactor is Mg(2+).

Functionally, may play a role in fatty acid biosynthesis. This chain is Citrate lyase subunit beta-like protein, found in Deinococcus radiodurans (strain ATCC 13939 / DSM 20539 / JCM 16871 / CCUG 27074 / LMG 4051 / NBRC 15346 / NCIMB 9279 / VKM B-1422 / R1).